A 669-amino-acid polypeptide reads, in one-letter code: DNA ligase (669 aa).

NAD(+)-binding positions include 33 to 37 (DVTYD), 82 to 83 (SL), and Glu-115. The N6-AMP-lysine intermediate role is filled by Lys-117. Positions 138, 172, 286, and 310 each coordinate NAD(+). Zn(2+)-binding residues include Cys-401, Cys-404, Cys-417, and Cys-422. The BRCT domain occupies 589-669 (IDSSFLFGKK…DIKNLVNLDD (81 aa)).

It belongs to the NAD-dependent DNA ligase family. LigA subfamily. It depends on Mg(2+) as a cofactor. Requires Mn(2+) as cofactor.

The catalysed reaction is NAD(+) + (deoxyribonucleotide)n-3'-hydroxyl + 5'-phospho-(deoxyribonucleotide)m = (deoxyribonucleotide)n+m + AMP + beta-nicotinamide D-nucleotide.. DNA ligase that catalyzes the formation of phosphodiester linkages between 5'-phosphoryl and 3'-hydroxyl groups in double-stranded DNA using NAD as a coenzyme and as the energy source for the reaction. It is essential for DNA replication and repair of damaged DNA. In Borrelia recurrentis (strain A1), this protein is DNA ligase.